Reading from the N-terminus, the 491-residue chain is Katanin p60 ATPase-containing subunit A1 (491 aa).

The segment at 1–29 (MSLQMIVENVKLAREYALLGNYDSAMVYY) is interaction with KATNB1. The segment at 1–75 (MSLQMIVENV…VKDIMKTLES (75 aa)) is interaction with dynein and NDEL1. Residues 1–185 (MSLQMIVENV…EPEANKFDGT (185 aa)) are interaction with microtubules; sufficient for microtubule severing activity. At serine 42 the chain carries Phosphoserine; by DYRK2. The segment at 101-182 (PVPVERRPLP…AVTEPEANKF (82 aa)) is disordered. Over residues 145–169 (HNDRGKAVRSREKKEQSKGREEKNK) the composition is skewed to basic and acidic residues. 249–256 (GPPGTGKT) is a binding site for ATP.

It belongs to the AAA ATPase family. Katanin p60 subunit A1 subfamily. As to quaternary structure, can homooligomerize into hexameric rings, which may be promoted by interaction with microtubules. Interacts with KATNB1, which may serve as a targeting subunit. Interacts with ASPM; the katanin complex formation KATNA1:KATNB1 is required for the association of ASPM. Interacts with dynein and NDEL1. Associates with the E3 ligase complex containing DYRK2, EDD/UBR5, DDB1 and DCAF1 proteins (EDVP complex). Interacts with KLHL42 (via the kelch domains). Interacts with CUL3; the interaction is enhanced by KLHL42. Interacts with KATNB1 and KATNBL1. Interacts with CAMSAP2 and CAMSAP3; leading to regulate the length of CAMSAP-decorated microtubule stretches. In terms of processing, phosphorylation by DYRK2 triggers ubiquitination and subsequent degradation. Ubiquitinated by the BCR(KLHL42) E3 ubiquitin ligase complex, leading to its proteasomal degradation. Ubiquitinated by the EDVP E3 ligase complex and subsequently targeted for proteasomal degradation.

It is found in the cytoplasm. Its subcellular location is the midbody. The protein resides in the cytoskeleton. The protein localises to the microtubule organizing center. It localises to the centrosome. It is found in the spindle pole. Its subcellular location is the spindle. It catalyses the reaction n ATP + n H2O + a microtubule = n ADP + n phosphate + (n+1) alpha/beta tubulin heterodimers.. Its activity is regulated as follows. ATPase activity is stimulated by microtubules, which promote homooligomerization. ATP-dependent microtubule severing is stimulated by interaction with KATNB1. In terms of biological role, catalytic subunit of a complex which severs microtubules in an ATP-dependent manner. Microtubule severing may promote rapid reorganization of cellular microtubule arrays and the release of microtubules from the centrosome following nucleation. Microtubule release from the mitotic spindle poles may allow depolymerization of the microtubule end proximal to the spindle pole, leading to poleward microtubule flux and poleward motion of chromosome. The function in regulating microtubule dynamics at spindle poles seems to depend on the association of the katanin KATNA1:KATNB1 complex with ASPM which recruits it to microtubules. Reversely KATNA1:KATNB1 can enhance ASPM blocking activity on microtubule minus-end growth. Microtubule release within the cell body of neurons may be required for their transport into neuronal processes by microtubule-dependent motor proteins. This transport is required for axonal growth. The sequence is that of Katanin p60 ATPase-containing subunit A1 (Katna1) from Mus musculus (Mouse).